The chain runs to 464 residues: Cysteine--tRNA ligase (464 aa).

Cys-29 is a binding site for Zn(2+). A 'HIGH' region motif is present at residues 31–41 (ATVQGVPHIGH). The interval 160–180 (RLDEVQQGESTASGKRDPRDF) is disordered. Zn(2+) contacts are provided by Cys-208, His-233, and Glu-237. Positions 264–268 (KMSKS) match the 'KMSKS' region motif. Lys-267 serves as a coordination point for ATP.

The protein belongs to the class-I aminoacyl-tRNA synthetase family. In terms of assembly, monomer. Requires Zn(2+) as cofactor.

It localises to the cytoplasm. The enzyme catalyses tRNA(Cys) + L-cysteine + ATP = L-cysteinyl-tRNA(Cys) + AMP + diphosphate. This chain is Cysteine--tRNA ligase, found in Saccharopolyspora erythraea (strain ATCC 11635 / DSM 40517 / JCM 4748 / NBRC 13426 / NCIMB 8594 / NRRL 2338).